The chain runs to 43 residues: Methionine aminopeptidase (43 aa).

Belongs to the peptidase M24A family. Methionine aminopeptidase type 1 subfamily. As to quaternary structure, monomer. The cofactor is Co(2+). Zn(2+) serves as cofactor. It depends on Mn(2+) as a cofactor. Requires Fe(2+) as cofactor.

It carries out the reaction Release of N-terminal amino acids, preferentially methionine, from peptides and arylamides.. Functionally, removes the N-terminal methionine from nascent proteins. The N-terminal methionine is often cleaved when the second residue in the primary sequence is small and uncharged (Met-Ala-, Cys, Gly, Pro, Ser, Thr, or Val). Requires deformylation of the N(alpha)-formylated initiator methionine before it can be hydrolyzed. The chain is Methionine aminopeptidase (map) from Klebsiella oxytoca.